Reading from the N-terminus, the 356-residue chain is DNA polymerase IV (356 aa).

The 182-residue stretch at 7 to 188 (IIHIDMDCFY…LPLKKIPGVG (182 aa)) folds into the UmuC domain. Mg(2+) contacts are provided by Asp-11 and Asp-106. Residue Glu-107 is part of the active site.

This sequence belongs to the DNA polymerase type-Y family. Monomer. Mg(2+) is required as a cofactor.

The protein localises to the cytoplasm. It catalyses the reaction DNA(n) + a 2'-deoxyribonucleoside 5'-triphosphate = DNA(n+1) + diphosphate. Its function is as follows. Poorly processive, error-prone DNA polymerase involved in untargeted mutagenesis. Copies undamaged DNA at stalled replication forks, which arise in vivo from mismatched or misaligned primer ends. These misaligned primers can be extended by PolIV. Exhibits no 3'-5' exonuclease (proofreading) activity. May be involved in translesional synthesis, in conjunction with the beta clamp from PolIII. This chain is DNA polymerase IV, found in Actinobacillus pleuropneumoniae serotype 3 (strain JL03).